An 84-amino-acid polypeptide reads, in one-letter code: MKLLYLFLAILLAIEEPVISGKRHILRRMGNSGICRASCKKNEQPYLYCRNYQSCCLQSYMRISISGKEENTDWSYEKQWPRLP.

An N-terminal signal peptide occupies residues 1 to 21; that stretch reads MKLLYLFLAILLAIEEPVISG. Disulfide bonds link C35-C49 and C39-C56.

This sequence belongs to the beta-defensin family.

The protein localises to the secreted. Has antibacterial activity. The sequence is that of Beta-defensin 119 (DEFB119) from Pan troglodytes (Chimpanzee).